A 201-amino-acid polypeptide reads, in one-letter code: Transgelin (201 aa).

Alanine 2 is subject to N-acetylalanine. In terms of domain architecture, Calponin-homology (CH) spans 24-137; the sequence is EELEERLVEW…RTLMALGSLA (114 aa). Phosphoserine is present on serine 166. The residue at position 172 (lysine 172) is an N6-acetyllysine. A Calponin-like repeat occupies 175-200; sequence IGLQMGSNRGASQAGMTGYGRPRQII. Serine 181 carries the post-translational modification Phosphoserine. Arginine 183 carries the omega-N-methylarginine modification.

It belongs to the calponin family.

Its subcellular location is the cytoplasm. Its function is as follows. Actin cross-linking/gelling protein. Involved in calcium interactions and contractile properties of the cell that may contribute to replicative senescence. The sequence is that of Transgelin (TAGLN) from Homo sapiens (Human).